The primary structure comprises 276 residues: MESTIGIDAGGTLTKIAYLNEKKKLTFEKFYSNEQDKIIDWLKKQTSIKQICITGGKAKQLQQLLSDSYKIVELNEFEATLVGVRYILKEEKYDINNFVLTNIGTGTSIHYIYNDRYIRAGGTGVGGGTIMGLSKLLTNIDHFEDVIPLTKVGSRKGLDITVGDIYGGILSPIDNSLTASNFGKAATIESNYNNSDILATVQGLVGEVVTALSLQFAETKNIDHIIYIGSTLCNNIHLQNIISSYTKYQNKTPIFLRDGGNSGAIGALLYATNKKS.

8 to 15 (DAGGTLTK) contributes to the ATP binding site. Glu-76 acts as the Proton acceptor in catalysis. ATP-binding positions include Thr-105, 127-131 (GGTIM), Phe-143, and Ser-230.

Belongs to the type II pantothenate kinase family. In terms of assembly, homodimer.

It localises to the cytoplasm. It carries out the reaction (R)-pantothenate + ATP = (R)-4'-phosphopantothenate + ADP + H(+). Its pathway is cofactor biosynthesis; coenzyme A biosynthesis; CoA from (R)-pantothenate: step 1/5. Its function is as follows. Catalyzes the phosphorylation of pantothenate (Pan), the first step in CoA biosynthesis. This chain is Type II pantothenate kinase, found in Bacillus cereus (strain ZK / E33L).